The sequence spans 211 residues: Holliday junction resolvase RecU (211 aa).

The Mg(2+) site is built by threonine 95, aspartate 97, glutamate 110, and glutamine 129.

It belongs to the RecU family. The cofactor is Mg(2+).

It is found in the cytoplasm. It catalyses the reaction Endonucleolytic cleavage at a junction such as a reciprocal single-stranded crossover between two homologous DNA duplexes (Holliday junction).. In terms of biological role, endonuclease that resolves Holliday junction intermediates in genetic recombination. Cleaves mobile four-strand junctions by introducing symmetrical nicks in paired strands. Promotes annealing of linear ssDNA with homologous dsDNA. Required for DNA repair, homologous recombination and chromosome segregation. The sequence is that of Holliday junction resolvase RecU from Lactobacillus acidophilus (strain ATCC 700396 / NCK56 / N2 / NCFM).